A 133-amino-acid polypeptide reads, in one-letter code: Agouti-signaling protein (133 aa).

Residues 1–22 (MDVIHLFLATLLVSLCFLTAYS) form the signal peptide. Over residues 26 to 36 (PEEKPKDDRSL) the composition is skewed to basic and acidic residues. The segment at 26-83 (PEEKPKDDRSLRNNSSMNLLDSPSVSIMALNKKSKKISRKEAEKKKRSSKKKASMTKV) is disordered. The segment covering 37 to 50 (RNNSSMNLLDSPSV) has biased composition (polar residues). 2 N-linked (GlcNAc...) asparagine glycosylation sites follow: Asn-38 and Asn-39. Residues 70 to 79 (KKRSSKKKAS) show a composition bias toward basic residues. 5 disulfides stabilise this stretch: Cys-94/Cys-109, Cys-101/Cys-115, Cys-108/Cys-126, Cys-112/Cys-133, and Cys-117/Cys-124. The region spanning 94–133 (CVATRDSCKPPAPACCDPCASCQCRFFRSACSCRVLTRTC) is the Agouti domain.

The protein resides in the secreted. In terms of biological role, involved in the regulation of melanogenesis. The binding of ASP to MC1R precludes alpha-MSH initiated signaling and thus blocks production of cAMP, leading to a down-regulation of eumelanogenesis (brown/black pigment) and thus increasing synthesis of pheomelanin (yellow/red pigment). In Equus caballus (Horse), this protein is Agouti-signaling protein (ASIP).